A 388-amino-acid chain; its full sequence is G2/mitotic-specific cyclin-B2 (388 aa).

Positions 46-67 (ATNGKVGPSKKPSKASCVQKPK) are disordered.

Belongs to the cyclin family. Cyclin AB subfamily. In terms of assembly, interacts with the CDK1 protein kinase to form a serine/threonine kinase holoenzyme complex also known as maturation promoting factor (MPF). The cyclin subunit imparts substrate specificity to the complex.

In terms of biological role, essential for the control of the cell cycle at the G2/M (mitosis) transition. The chain is G2/mitotic-specific cyclin-B2 (ccnb2) from Oryzias curvinotus (Hynann ricefish).